The sequence spans 143 residues: Large ribosomal subunit protein uL13 (143 aa).

It belongs to the universal ribosomal protein uL13 family. In terms of assembly, part of the 50S ribosomal subunit.

Its function is as follows. This protein is one of the early assembly proteins of the 50S ribosomal subunit, although it is not seen to bind rRNA by itself. It is important during the early stages of 50S assembly. The chain is Large ribosomal subunit protein uL13 from Clostridioides difficile (strain 630) (Peptoclostridium difficile).